A 396-amino-acid chain; its full sequence is S-adenosylmethionine synthase (396 aa).

His16 contributes to the ATP binding site. Position 18 (Asp18) interacts with Mg(2+). Position 44 (Glu44) interacts with K(+). L-methionine-binding residues include Glu57 and Gln100. The tract at residues 100-110 is flexible loop; it reads QSQDIARGVDN. ATP contacts are provided by residues 162 to 164, 228 to 229, Asp237, 243 to 244, Ala260, and Lys264; these read DGK, RF, and RK. Asp237 is an L-methionine binding site. Position 268 (Lys268) interacts with L-methionine.

This sequence belongs to the AdoMet synthase family. In terms of assembly, homotetramer; dimer of dimers. Mg(2+) is required as a cofactor. Requires K(+) as cofactor.

It localises to the cytoplasm. It carries out the reaction L-methionine + ATP + H2O = S-adenosyl-L-methionine + phosphate + diphosphate. The protein operates within amino-acid biosynthesis; S-adenosyl-L-methionine biosynthesis; S-adenosyl-L-methionine from L-methionine: step 1/1. In terms of biological role, catalyzes the formation of S-adenosylmethionine (AdoMet) from methionine and ATP. The overall synthetic reaction is composed of two sequential steps, AdoMet formation and the subsequent tripolyphosphate hydrolysis which occurs prior to release of AdoMet from the enzyme. The polypeptide is S-adenosylmethionine synthase (Myxococcus xanthus (strain DK1622)).